A 403-amino-acid chain; its full sequence is D-galactonate dehydratase family member RspA (403 aa).

The substrate site is built by Asn-37 and His-122. Tyr-159 serves as the catalytic Proton donor/acceptor. Asp-211 is a Mg(2+) binding site. His-213 functions as the Proton donor/acceptor in the catalytic mechanism. Mg(2+) contacts are provided by Glu-237 and Glu-263. Positions 263, 284, 313, 317, and 340 each coordinate substrate.

The protein belongs to the mandelate racemase/muconate lactonizing enzyme family. GalD subfamily. Requires Mg(2+) as cofactor.

The catalysed reaction is D-mannonate = 2-dehydro-3-deoxy-D-gluconate + H2O. The enzyme catalyses D-gluconate = 2-dehydro-3-deoxy-D-gluconate + H2O. Has low dehydratase activity with D-mannonate and D-gluconate, suggesting that these are not physiological substrates and that it has no significant role in the in vivo degradation of these compounds. Has no detectable activity with a panel of 70 other acid sugars (in vitro). This is D-galactonate dehydratase family member RspA (rspA) from Halomonas elongata (strain ATCC 33173 / DSM 2581 / NBRC 15536 / NCIMB 2198 / 1H9).